We begin with the raw amino-acid sequence, 435 residues long: 3-phosphoshikimate 1-carboxyvinyltransferase (435 aa).

Positions 15, 16, and 20 each coordinate 3-phosphoshikimate. Phosphoenolpyruvate is bound at residue Lys-15. The phosphoenolpyruvate site is built by Gly-96 and Arg-124. Positions 169, 171, 195, 319, and 346 each coordinate 3-phosphoshikimate. Gln-171 provides a ligand contact to phosphoenolpyruvate. The Proton acceptor role is filled by Asp-319. Arg-350 and Arg-395 together coordinate phosphoenolpyruvate.

This sequence belongs to the EPSP synthase family. In terms of assembly, monomer.

It is found in the cytoplasm. It catalyses the reaction 3-phosphoshikimate + phosphoenolpyruvate = 5-O-(1-carboxyvinyl)-3-phosphoshikimate + phosphate. Its pathway is metabolic intermediate biosynthesis; chorismate biosynthesis; chorismate from D-erythrose 4-phosphate and phosphoenolpyruvate: step 6/7. In terms of biological role, catalyzes the transfer of the enolpyruvyl moiety of phosphoenolpyruvate (PEP) to the 5-hydroxyl of shikimate-3-phosphate (S3P) to produce enolpyruvyl shikimate-3-phosphate and inorganic phosphate. The chain is 3-phosphoshikimate 1-carboxyvinyltransferase from Chlorobium phaeobacteroides (strain BS1).